Here is a 113-residue protein sequence, read N- to C-terminus: Cytochrome c (113 aa).

The heme c site is built by Cys-21, Cys-24, His-25, and Met-90.

The protein belongs to the cytochrome c family. In terms of processing, binds 1 heme c group covalently per subunit.

The protein resides in the mitochondrion intermembrane space. Functionally, electron carrier protein. The oxidized form of the cytochrome c heme group can accept an electron from the heme group of the cytochrome c1 subunit of cytochrome reductase. Cytochrome c then transfers this electron to the cytochrome oxidase complex, the final protein carrier in the mitochondrial electron-transport chain. The chain is Cytochrome c (cytC) from Dictyostelium discoideum (Social amoeba).